The sequence spans 261 residues: uncharacterized protein (261 aa).

This is an uncharacterized protein from Mycobacterium tuberculosis (strain CDC 1551 / Oshkosh).